An 825-amino-acid chain; its full sequence is NT-3 growth factor receptor (825 aa).

The signal sequence occupies residues 1-31 (MDVSLCPAKCSFWRIFLLGSVWLDYVGSVLA). 2 disulfide bridges follow: C32–C38 and C36–C45. Over 32-429 (CPANCVCSKT…TVTHKPEEDT (398 aa)) the chain is Extracellular. N-linked (GlcNAc...) asparagine glycans are attached at residues N68, N72, and N79. LRR repeat units follow at residues 104-125 (GLQK…AFAK) and 128-149 (HLRY…LFQT). N-linked (GlcNAc...) asparagine glycans are attached at residues N133 and N163. An LRRCT domain is found at 160–209 (NFFNCSCDIRWMQLWQEQGEAKLNSQNLYCINTDGSQLPLFRMNISQCDL). Intrachain disulfides connect C164-C189 and C166-C207. N203, N218, N232, N259, N267, N272, and N294 each carry an N-linked (GlcNAc...) asparagine glycan. Ig-like C2-type domains are found at residues 210-300 (PEIS…VALT) and 309-382 (SLEE…IAKN). A disulfide bridge connects residues C231 and C284. C320 and C362 form a disulfide bridge. N-linked (GlcNAc...) asparagine glycans are attached at residues N375 and N388. The helical transmembrane segment at 430 to 453 (FGVSIAVGLAAFACVLLVVLFVMI) threads the bilayer. At 454–825 (NKYGRRSKFG…ATPIYLDILG (372 aa)) the chain is on the cytoplasmic side. A Phosphoserine modification is found at S493. At Y516 the chain carries Phosphotyrosine; by autocatalysis. The Protein kinase domain maps to 538 to 825 (IVLKRELGEG…ATPIYLDILG (288 aa)). ATP-binding positions include 544-552 (LGEGAFGKV) and K572. Catalysis depends on D679, which acts as the Proton acceptor. Phosphotyrosine; by autocatalysis occurs at positions 705, 709, and 710.

This sequence belongs to the protein kinase superfamily. Tyr protein kinase family. Insulin receptor subfamily. Exists in a dynamic equilibrium between monomeric (low affinity) and dimeric (high affinity) structures. Binds SH2B2. Interacts with SQSTM1 and KIDINS220. Interacts with PTPRS. Interacts with MAPK8IP3/JIP3. Ligand-mediated auto-phosphorylation.

It is found in the membrane. The enzyme catalyses L-tyrosyl-[protein] + ATP = O-phospho-L-tyrosyl-[protein] + ADP + H(+). Its function is as follows. Receptor tyrosine kinase involved in nervous system and probably heart development. Upon binding of its ligand NTF3/neurotrophin-3, NTRK3 autophosphorylates and activates different signaling pathways, including the phosphatidylinositol 3-kinase/AKT and the MAPK pathways, that control cell survival and differentiation. The protein is NT-3 growth factor receptor (NTRK3) of Pan troglodytes (Chimpanzee).